A 244-amino-acid polypeptide reads, in one-letter code: Uridylate kinase (244 aa).

Residue 17–20 (KVSG) participates in ATP binding. Residues 25 to 30 (GDKGFG) are involved in allosteric activation by GTP. G59 serves as a coordination point for UMP. ATP-binding residues include G60 and R64. Residues D80 and 141–148 (VGNPFFTT) contribute to the UMP site. 4 residues coordinate ATP: T168, Q169, Y174, and D177.

It belongs to the UMP kinase family. Homohexamer.

The protein localises to the cytoplasm. It catalyses the reaction UMP + ATP = UDP + ADP. It functions in the pathway pyrimidine metabolism; CTP biosynthesis via de novo pathway; UDP from UMP (UMPK route): step 1/1. Allosterically activated by GTP. Inhibited by UTP. In terms of biological role, catalyzes the reversible phosphorylation of UMP to UDP. This is Uridylate kinase from Ehrlichia ruminantium (strain Welgevonden).